We begin with the raw amino-acid sequence, 400 residues long: Nicotinate phosphoribosyltransferase (400 aa).

His-220 is modified (phosphohistidine; by autocatalysis).

This sequence belongs to the NAPRTase family. Post-translationally, transiently phosphorylated on a His residue during the reaction cycle. Phosphorylation strongly increases the affinity for substrates and increases the rate of nicotinate D-ribonucleotide production. Dephosphorylation regenerates the low-affinity form of the enzyme, leading to product release.

It catalyses the reaction nicotinate + 5-phospho-alpha-D-ribose 1-diphosphate + ATP + H2O = nicotinate beta-D-ribonucleotide + ADP + phosphate + diphosphate. It functions in the pathway cofactor biosynthesis; NAD(+) biosynthesis; nicotinate D-ribonucleotide from nicotinate: step 1/1. Catalyzes the synthesis of beta-nicotinate D-ribonucleotide from nicotinate and 5-phospho-D-ribose 1-phosphate at the expense of ATP. The sequence is that of Nicotinate phosphoribosyltransferase from Salmonella agona (strain SL483).